The following is a 209-amino-acid chain: Uracil phosphoribosyltransferase (209 aa).

5-phospho-alpha-D-ribose 1-diphosphate is bound by residues arginine 79, arginine 104, and 131 to 139 (DPMLATGNS). Residues isoleucine 194 and 199–201 (GDA) each bind uracil. Aspartate 200 is a binding site for 5-phospho-alpha-D-ribose 1-diphosphate.

This sequence belongs to the UPRTase family. It depends on Mg(2+) as a cofactor.

It carries out the reaction UMP + diphosphate = 5-phospho-alpha-D-ribose 1-diphosphate + uracil. It participates in pyrimidine metabolism; UMP biosynthesis via salvage pathway; UMP from uracil: step 1/1. With respect to regulation, allosterically activated by GTP. Catalyzes the conversion of uracil and 5-phospho-alpha-D-ribose 1-diphosphate (PRPP) to UMP and diphosphate. This Sinorhizobium fredii (strain NBRC 101917 / NGR234) protein is Uracil phosphoribosyltransferase.